A 356-amino-acid polypeptide reads, in one-letter code: tRNA N6-adenosine threonylcarbamoyltransferase (356 aa).

Fe cation is bound by residues His131 and His135. Substrate is bound by residues 154–158 (LVSGG), Asp187, Gly200, and Asn289. Residue Asp317 coordinates Fe cation.

Belongs to the KAE1 / TsaD family. It depends on Fe(2+) as a cofactor.

The protein resides in the cytoplasm. The catalysed reaction is L-threonylcarbamoyladenylate + adenosine(37) in tRNA = N(6)-L-threonylcarbamoyladenosine(37) in tRNA + AMP + H(+). Required for the formation of a threonylcarbamoyl group on adenosine at position 37 (t(6)A37) in tRNAs that read codons beginning with adenine. Is involved in the transfer of the threonylcarbamoyl moiety of threonylcarbamoyl-AMP (TC-AMP) to the N6 group of A37, together with TsaE and TsaB. TsaD likely plays a direct catalytic role in this reaction. This is tRNA N6-adenosine threonylcarbamoyltransferase from Ruthia magnifica subsp. Calyptogena magnifica.